We begin with the raw amino-acid sequence, 537 residues long: Phosphoenolpyruvate carboxykinase (ATP) (537 aa).

Residues Arg61, Tyr195, and Lys201 each coordinate substrate. Residues Lys201, His220, and 236–244 (GLSGTGKTT) each bind ATP. Mn(2+)-binding residues include Lys201 and His220. Position 257 (Asp257) interacts with Mn(2+). ATP contacts are provided by Glu285, Arg323, and Thr448. Arg323 provides a ligand contact to substrate.

This sequence belongs to the phosphoenolpyruvate carboxykinase (ATP) family. Requires Mn(2+) as cofactor.

The protein resides in the cytoplasm. It carries out the reaction oxaloacetate + ATP = phosphoenolpyruvate + ADP + CO2. The protein operates within carbohydrate biosynthesis; gluconeogenesis. Involved in the gluconeogenesis. Catalyzes the conversion of oxaloacetate (OAA) to phosphoenolpyruvate (PEP) through direct phosphoryl transfer between the nucleoside triphosphate and OAA. The polypeptide is Phosphoenolpyruvate carboxykinase (ATP) (Rhodopseudomonas palustris (strain ATCC BAA-98 / CGA009)).